Here is a 231-residue protein sequence, read N- to C-terminus: Large ribosomal subunit protein uL1 (231 aa).

Belongs to the universal ribosomal protein uL1 family. Part of the 50S ribosomal subunit.

Functionally, binds directly to 23S rRNA. The L1 stalk is quite mobile in the ribosome, and is involved in E site tRNA release. In terms of biological role, protein L1 is also a translational repressor protein, it controls the translation of the L11 operon by binding to its mRNA. This is Large ribosomal subunit protein uL1 from Clostridium kluyveri (strain NBRC 12016).